The primary structure comprises 363 residues: tRNA-specific 2-thiouridylase MnmA (363 aa).

Residues 8–15 (AMSGGVDS) and L34 each bind ATP. Catalysis depends on C103, which acts as the Nucleophile. An intrachain disulfide couples C103 to C195. G127 serves as a coordination point for ATP. The segment at 145-147 (KDQ) is interaction with tRNA. C195 (cysteine persulfide intermediate) is an active-site residue.

The protein belongs to the MnmA/TRMU family.

The protein resides in the cytoplasm. It catalyses the reaction S-sulfanyl-L-cysteinyl-[protein] + uridine(34) in tRNA + AH2 + ATP = 2-thiouridine(34) in tRNA + L-cysteinyl-[protein] + A + AMP + diphosphate + H(+). Catalyzes the 2-thiolation of uridine at the wobble position (U34) of tRNA, leading to the formation of s(2)U34. The sequence is that of tRNA-specific 2-thiouridylase MnmA from Thermobifida fusca (strain YX).